The sequence spans 216 residues: Probable transaldolase (216 aa).

K83 functions as the Schiff-base intermediate with substrate in the catalytic mechanism.

The protein belongs to the transaldolase family. Type 3B subfamily.

It is found in the cytoplasm. The enzyme catalyses D-sedoheptulose 7-phosphate + D-glyceraldehyde 3-phosphate = D-erythrose 4-phosphate + beta-D-fructose 6-phosphate. The protein operates within carbohydrate degradation; pentose phosphate pathway; D-glyceraldehyde 3-phosphate and beta-D-fructose 6-phosphate from D-ribose 5-phosphate and D-xylulose 5-phosphate (non-oxidative stage): step 2/3. Its function is as follows. Transaldolase is important for the balance of metabolites in the pentose-phosphate pathway. The sequence is that of Probable transaldolase from Thermosipho africanus (strain TCF52B).